The sequence spans 305 residues: Flagellin FlaB2 (305 aa).

The propeptide at 1–18 (MGLQKIVKKYNKKMKRKG) is propeptide.

The protein belongs to the archaeal flagellin family. Glycosylated.

It localises to the archaeal flagellum. In terms of biological role, flagellin is the subunit protein which polymerizes to form the filaments of archaeal flagella. The polypeptide is Flagellin FlaB2 (Saccharolobus shibatae (strain ATCC 51178 / DSM 5389 / JCM 8931 / NBRC 15437 / B12) (Sulfolobus shibatae)).